Here is a 993-residue protein sequence, read N- to C-terminus: Importin subunit beta-5 (993 aa).

One can recognise an Importin N-terminal domain in the interval 24–100 (AELGLRDLEK…RETLLHLLVS (77 aa)).

Its subcellular location is the nucleus. Functionally, required for nuclear protein import and mediates docking of import substrate to distinct nucleoporins. Serves a receptor for nuclear localization signals. Mediates the nuclear import of TATA-binding protein (TBP) and of histones H2A and H2B. The chain is Importin subunit beta-5 (kap114) from Schizosaccharomyces pombe (strain 972 / ATCC 24843) (Fission yeast).